A 319-amino-acid chain; its full sequence is MDSPAFAVTGMFAAAKVGVTSFTGATEPVSTRRRTSGNVTMAVDAFQKKFQTFGKIGVDYSRPKKLASYKRGGFDAASVEYPNAPSFAGKYSIAPCGQPSGASKILMKYDEYCAKGVLQVFKRNAVPFGVYTTKCTEGTVAGQAQEKRVFNRTMAFRQAQKPVNVRLAEQYEARRKCFILANGCSREEDQFKSMPVSAATFLAGKHESLGTCFRVVTPSNIAEDYIASGVRMQLVAKSNSTGVYGVGSCMEGFAKGDAEARRVAALAAEYRALQQSPAAVTGRQYESSRMAVKLYAQNCSHEQEQLYKWPATAAAFCRY.

Residues 1–71 (MDSPAFAVTG…RPKKLASYKR (71 aa)) constitute a chloroplast transit peptide. The phycourobilin site is built by C96 and C135. C212 contributes to the (2R,3E)-phycoerythrobilin binding site. C299 contacts phycourobilin.

Heteromer of 4 alpha, 4 beta and one gamma chains. Post-translationally, contains four covalently linked bilin chromophores.

It localises to the plastid. It is found in the chloroplast thylakoid membrane. The chain is R-phycoerythrin gamma chain, chloroplastic from Corallina officinalis (Coral seaweed).